The chain runs to 219 residues: uncharacterized protein (219 aa).

At S23 the chain carries Phosphoserine. K137 is covalently cross-linked (Glycyl lysine isopeptide (Lys-Gly) (interchain with G-Cter in SUMO)).

The protein localises to the cytoplasm. This is an uncharacterized protein from Saccharomyces cerevisiae (strain ATCC 204508 / S288c) (Baker's yeast).